Reading from the N-terminus, the 81-residue chain is ATP synthase subunit c, chloroplastic (81 aa).

2 consecutive transmembrane segments (helical) span residues 4–24 and 57–77; these read VISA…SIGP and LAFM…LLFA.

It belongs to the ATPase C chain family. As to quaternary structure, F-type ATPases have 2 components, F(1) - the catalytic core - and F(0) - the membrane proton channel. F(1) has five subunits: alpha(3), beta(3), gamma(1), delta(1), epsilon(1). F(0) has four main subunits: a(1), b(1), b'(1) and c(10-14). The alpha and beta chains form an alternating ring which encloses part of the gamma chain. F(1) is attached to F(0) by a central stalk formed by the gamma and epsilon chains, while a peripheral stalk is formed by the delta, b and b' chains.

It localises to the plastid. Its subcellular location is the chloroplast thylakoid membrane. In terms of biological role, f(1)F(0) ATP synthase produces ATP from ADP in the presence of a proton or sodium gradient. F-type ATPases consist of two structural domains, F(1) containing the extramembraneous catalytic core and F(0) containing the membrane proton channel, linked together by a central stalk and a peripheral stalk. During catalysis, ATP synthesis in the catalytic domain of F(1) is coupled via a rotary mechanism of the central stalk subunits to proton translocation. Key component of the F(0) channel; it plays a direct role in translocation across the membrane. A homomeric c-ring of between 10-14 subunits forms the central stalk rotor element with the F(1) delta and epsilon subunits. The chain is ATP synthase subunit c, chloroplastic from Zygnema circumcarinatum (Green alga).